The following is a 204-amino-acid chain: Partner of Y14 and mago (204 aa).

2 disordered regions span residues 1 to 121 and 133 to 153; these read MGSR…QSVN and SSNN…EDVE. Over residues 7 to 36 the composition is skewed to basic and acidic residues; the sequence is EQGKRMAELSKNLKEGERILEPTRRPDGTL. Polar residues predominate over residues 104-121; that stretch reads KANSSEDGSASNGSQSVN. The short motif at 195 to 200 is the Nuclear export signal element; the sequence is ELKALE.

Belongs to the pym family. As to quaternary structure, interacts with MAGO and Y14. In terms of tissue distribution, expressed in root and shoot meristems, cotyledons, vascular tissues of leaves, receptacle of flowers and siliques, and pollen grains.

Its subcellular location is the cytoplasm. It localises to the nucleus. The protein resides in the nucleolus. The protein localises to the nucleoplasm. In terms of biological role, key regulator of the exon junction complex (EJC), a multiprotein complex that associates immediately upstream of the exon-exon junction on mRNAs and serves as a positional landmark for the intron exon structure of genes and directs post-transcriptional processes in the cytoplasm such as mRNA export, nonsense-mediated mRNA decay (NMD) or translation. Acts as an EJC disassembly factor, allowing translation-dependent EJC removal and recycling by disrupting mature EJC from spliced mRNAs. Can increase in vitro the expression from reporter constructs that contain leader introns required for the expression of different genes. In association with MAGO and PYM, participates in intron-mediated enhancement of gene expression. The chain is Partner of Y14 and mago from Arabidopsis thaliana (Mouse-ear cress).